A 120-amino-acid polypeptide reads, in one-letter code: UPF0231 protein YacL (120 aa).

The protein belongs to the UPF0231 family.

The sequence is that of UPF0231 protein YacL from Escherichia coli O81 (strain ED1a).